The primary structure comprises 55 residues: Small ribosomal subunit protein uS14 (55 aa).

Residues Cys-20, Cys-23, Cys-38, and Cys-41 each coordinate Zn(2+).

It belongs to the universal ribosomal protein uS14 family. The cofactor is Zn(2+).

The protein is Small ribosomal subunit protein uS14 (rps29) of Dictyostelium discoideum (Social amoeba).